A 365-amino-acid chain; its full sequence is MKHYRKIIHIDMDAFYASIEQRDNKKLKGRPVIVGGNPQSRGVVATCSYEARKFGIHSAMPSAVAYNRCPYAVFVRPRFDVYKSVSEKIRDIFYRYTDLVEPLSLDEAYLDVTKNKKNIDSSIEIAKQIKKDIFREVGLTSSAGVSYNKFLAKIASDLRKPNGLTVITEENAQDFLDKLPVNKFFGVGKVTSNTLKNLGIKTGYDLRCLNLFELENIFKKRGYELYKFARGIDDRPVEPNRVRKSVGAETTLSHNLDIDEEETRNILDELCEEVCHRLKNSEKFGKTLTLKIKYEDFTKITRSLSLEHYIDEYNDIRSGVDNLLRNVEVNGKQIRLLGVTISNLSDKKETYKDITLFEYMDSIQM.

One can recognise a UmuC domain in the interval 7–188 (IIHIDMDAFY…LPVNKFFGVG (182 aa)). Mg(2+)-binding residues include Asp11 and Asp106. Glu107 is a catalytic residue.

Belongs to the DNA polymerase type-Y family. In terms of assembly, monomer. It depends on Mg(2+) as a cofactor.

It is found in the cytoplasm. It catalyses the reaction DNA(n) + a 2'-deoxyribonucleoside 5'-triphosphate = DNA(n+1) + diphosphate. In terms of biological role, poorly processive, error-prone DNA polymerase involved in untargeted mutagenesis. Copies undamaged DNA at stalled replication forks, which arise in vivo from mismatched or misaligned primer ends. These misaligned primers can be extended by PolIV. Exhibits no 3'-5' exonuclease (proofreading) activity. May be involved in translesional synthesis, in conjunction with the beta clamp from PolIII. The polypeptide is DNA polymerase IV (Clostridioides difficile (strain 630) (Peptoclostridium difficile)).